A 94-amino-acid chain; its full sequence is Large ribosomal subunit protein bL27 (94 aa).

Positions 1 to 9 are excised as a propeptide; the sequence is MLELNLQLF. Residues 12–33 are disordered; that stretch reads KKGGGSTSNGRDSQAKRLGAKA.

The protein belongs to the bacterial ribosomal protein bL27 family. The N-terminus is cleaved by ribosomal processing cysteine protease Prp.

The protein is Large ribosomal subunit protein bL27 of Lactococcus lactis subsp. lactis (strain IL1403) (Streptococcus lactis).